We begin with the raw amino-acid sequence, 417 residues long: Ig-like V-type domain-containing protein FAM187A (417 aa).

The N-terminal stretch at 1 to 18 (MSLAHTTVLLWAWGSLQA) is a signal peptide. The Extracellular segment spans residues 19 to 377 (FEIVEKESVF…ASLSDPETRT (359 aa)). N-linked (GlcNAc...) asparagine glycosylation is found at N248 and N318. The Ig-like V-type domain maps to 268-362 (PWVPQVPIQF…IAGFRLGVIT (95 aa)). Cysteines 290 and 346 form a disulfide. The chain crosses the membrane as a helical span at residues 378–398 (AIELTLMGYLLITIFFITIHL). Topologically, residues 399 to 417 (CRCCCQSRCCPNFSAQTLL) are cytoplasmic.

Belongs to the FAM187 family.

Its subcellular location is the membrane. In Mus musculus (Mouse), this protein is Ig-like V-type domain-containing protein FAM187A (Fam187a).